Consider the following 253-residue polypeptide: Acetylglutamate kinase (253 aa).

Residues 37–38, R59, and N149 each bind substrate; that span reads GG.

This sequence belongs to the acetylglutamate kinase family. ArgB subfamily.

Its subcellular location is the cytoplasm. The catalysed reaction is N-acetyl-L-glutamate + ATP = N-acetyl-L-glutamyl 5-phosphate + ADP. It functions in the pathway amino-acid biosynthesis; L-arginine biosynthesis; N(2)-acetyl-L-ornithine from L-glutamate: step 2/4. Its function is as follows. Catalyzes the ATP-dependent phosphorylation of N-acetyl-L-glutamate. This is Acetylglutamate kinase from Rubrobacter xylanophilus (strain DSM 9941 / JCM 11954 / NBRC 16129 / PRD-1).